The sequence spans 167 residues: Photosystem II extrinsic protein V (167 aa).

The N-terminal stretch at 1 to 30 is a signal peptide; it reads MVFKTLRRTLWLTLAALLAVFQFNLGAAQA. 4 residues coordinate heme c: Cys-67, Cys-70, His-71, and His-122.

It belongs to the cytochrome c family. PsbV subfamily. In terms of assembly, PSII is composed of 1 copy each of membrane proteins PsbA, PsbB, PsbC, PsbD, PsbE, PsbF, PsbH, PsbI, PsbJ, PsbK, PsbL, PsbM, PsbT, PsbX, PsbY, PsbZ, Psb30/Ycf12, peripheral proteins PsbO, CyanoQ (PsbQ), PsbU, PsbV and a large number of cofactors. It forms dimeric complexes. Heme c serves as cofactor.

It is found in the cellular thylakoid membrane. One of the extrinsic, lumenal subunits of photosystem II (PSII). PSII is a light-driven water plastoquinone oxidoreductase, using light energy to abstract electrons from H(2)O, generating a proton gradient subsequently used for ATP formation. The extrinsic proteins stabilize the structure of photosystem II oxygen-evolving complex (OEC), the ion environment of oxygen evolution and protect the OEC against heat-induced inactivation. Low-potential cytochrome c that plays a role in the OEC of PSII. The chain is Photosystem II extrinsic protein V from Synechococcus elongatus (strain ATCC 33912 / PCC 7942 / FACHB-805) (Anacystis nidulans R2).